A 37-amino-acid chain; its full sequence is Toxin Bcg III 28.78 (37 aa).

Cys-6 and Cys-31 form a disulfide bridge.

The protein resides in the secreted. The protein localises to the nematocyst. In Bunodosoma cangicum (Sea anemone), this protein is Toxin Bcg III 28.78.